The primary structure comprises 168 residues: Crossover junction endodeoxyribonuclease RuvC (168 aa).

Active-site residues include Asp-7, Glu-66, and Asp-138. Residues Asp-7, Glu-66, and Asp-138 each contribute to the Mg(2+) site.

Belongs to the RuvC family. Homodimer which binds Holliday junction (HJ) DNA. The HJ becomes 2-fold symmetrical on binding to RuvC with unstacked arms; it has a different conformation from HJ DNA in complex with RuvA. In the full resolvosome a probable DNA-RuvA(4)-RuvB(12)-RuvC(2) complex forms which resolves the HJ. Requires Mg(2+) as cofactor.

Its subcellular location is the cytoplasm. The catalysed reaction is Endonucleolytic cleavage at a junction such as a reciprocal single-stranded crossover between two homologous DNA duplexes (Holliday junction).. The RuvA-RuvB-RuvC complex processes Holliday junction (HJ) DNA during genetic recombination and DNA repair. Endonuclease that resolves HJ intermediates. Cleaves cruciform DNA by making single-stranded nicks across the HJ at symmetrical positions within the homologous arms, yielding a 5'-phosphate and a 3'-hydroxyl group; requires a central core of homology in the junction. The consensus cleavage sequence is 5'-(A/T)TT(C/G)-3'. Cleavage occurs on the 3'-side of the TT dinucleotide at the point of strand exchange. HJ branch migration catalyzed by RuvA-RuvB allows RuvC to scan DNA until it finds its consensus sequence, where it cleaves and resolves the cruciform DNA. The polypeptide is Crossover junction endodeoxyribonuclease RuvC (Cereibacter sphaeroides (strain ATCC 17029 / ATH 2.4.9) (Rhodobacter sphaeroides)).